Consider the following 407-residue polypeptide: Protein FAM53B (407 aa).

Disordered stretches follow at residues S204–L286 and I306–P380. Basic and acidic residues-rich tracts occupy residues L264–K281 and D327–K339. The Nuclear localization signal motif lies at K272 to R275. Acidic residues predominate over residues I357–T369.

The protein belongs to the FAM53 family. As to quaternary structure, interacts with ctnnb1. As to expression, predominantly expressed in proliferating cells throughout embryonic development.

It localises to the nucleus. Functionally, acts as a regulator of Wnt signaling pathway by regulating beta-catenin (ctnnb1) nuclear localization. In Oryzias latipes (Japanese rice fish), this protein is Protein FAM53B.